A 175-amino-acid chain; its full sequence is Inorganic pyrophosphatase 1 (175 aa).

Substrate is bound by residues Lys-30, Arg-44, and Tyr-56. The Mg(2+) site is built by Asp-66, Asp-71, and Asp-103. Tyr-142 contacts substrate.

The protein belongs to the PPase family. As to quaternary structure, homohexamer. Requires Mg(2+) as cofactor.

Its subcellular location is the cytoplasm. It catalyses the reaction diphosphate + H2O = 2 phosphate + H(+). Functionally, catalyzes the hydrolysis of inorganic pyrophosphate (PPi) forming two phosphate ions. The sequence is that of Inorganic pyrophosphatase 1 from Pseudomonas syringae pv. tomato (strain ATCC BAA-871 / DC3000).